The primary structure comprises 689 residues: Long-chain fatty acid transport protein 5 (689 aa).

The Cytoplasmic segment spans residues 1–29 (MGIWKKLTLLLLLLLLVGLGQPPWPAAMA). Helical transmembrane passes span 30-50 (LALR…LALL) and 55-75 (ISSW…LFLL). The Cytoplasmic segment spans residues 76 to 689 (PLQPPPGLRW…QAVCEGTWNL (614 aa)). AMP is bound at residue 292–303 (IFTSGTTGLPKP).

It belongs to the ATP-dependent AMP-binding enzyme family. Liver-specific (at protein level). In liver expressed in a periportal distribution.

It localises to the endoplasmic reticulum membrane. The protein localises to the microsome. Its subcellular location is the cell membrane. It catalyses the reaction a fatty acid(in) = a fatty acid(out). The enzyme catalyses cholate + ATP + CoA = choloyl-CoA + AMP + diphosphate. It carries out the reaction (25R)-3alpha,7alpha,12alpha-trihydroxy-5beta-cholestan-26-oate + ATP + CoA = (25R)-3alpha,7alpha,12alpha-trihydroxy-5beta-cholestan-26-oyl-CoA + AMP + diphosphate. The catalysed reaction is chenodeoxycholate + ATP + CoA = chenodeoxycholoyl-CoA + AMP + diphosphate. It catalyses the reaction deoxycholate + ATP + CoA = deoxycholoyl-CoA + AMP + diphosphate. The enzyme catalyses lithocholate + ATP + CoA = lithocholoyl-CoA + AMP + diphosphate. It carries out the reaction a very long-chain fatty acid + ATP + CoA = a very long-chain fatty acyl-CoA + AMP + diphosphate. The catalysed reaction is tetracosanoate + ATP + CoA = tetracosanoyl-CoA + AMP + diphosphate. It catalyses the reaction hexacosanoate + ATP + CoA = hexacosanoyl-CoA + AMP + diphosphate. The enzyme catalyses a long-chain fatty acid + ATP + CoA = a long-chain fatty acyl-CoA + AMP + diphosphate. It carries out the reaction octadecanoate + ATP + CoA = octadecanoyl-CoA + AMP + diphosphate. The catalysed reaction is eicosanoate + ATP + CoA = eicosanoyl-CoA + AMP + diphosphate. Its function is as follows. Mediates the import of long-chain fatty acids (LCFA) by facilitating their transport across cell membranes. Also catalyzes the ATP-dependent formation of fatty acyl-CoA using LCFA and very-long-chain fatty acids (VLCFA) as substrates. Mainly functions as a bile acyl-CoA synthetase catalyzing the activation of bile acids via ATP-dependent formation of bile acid CoA thioesters which is necessary for their subsequent conjugation with glycine or taurine. Both primary bile acids (cholic acid and chenodeoxycholic acid) and secondary bile acids (deoxycholic acid and lithocholic acid) are the principal substrates. In vitro, activates 3-alpha,7-alpha,12-alpha-trihydroxy-5-beta-cholestanate ((25R)-3alpha,7alpha,12alpha-trihydroxy-5beta-cholestan-26-oate or THCA), the C27 precursor of cholic acid deriving from the de novo synthesis from cholesterol. Plays an important role in hepatic fatty acid uptake and bile acid reconjugation and recycling but not in de novo synthesis of bile acids. The polypeptide is Long-chain fatty acid transport protein 5 (Slc27a5) (Mus musculus (Mouse)).